The following is a 545-amino-acid chain: CTP synthase (545 aa).

Residues 1–266 (MTTRYIFVTG…DDLVIKRFNL (266 aa)) are amidoligase domain. Ser-14 is a CTP binding site. Ser-14 contributes to the UTP binding site. ATP is bound by residues 15-20 (SLGKGI) and Asp-72. Mg(2+)-binding residues include Asp-72 and Glu-140. CTP contacts are provided by residues 147-149 (DIE), 187-192 (KTKPTQ), and Lys-223. UTP contacts are provided by residues 187–192 (KTKPTQ) and Lys-223. Residue 239–241 (KDV) coordinates ATP. Residues 291-542 (TIGMVGKYIE…IAASYAYQKR (252 aa)) enclose the Glutamine amidotransferase type-1 domain. Gly-352 provides a ligand contact to L-glutamine. Catalysis depends on Cys-379, which acts as the Nucleophile; for glutamine hydrolysis. L-glutamine is bound by residues 380-383 (LGMQ), Glu-403, and Arg-470. Residues His-515 and Glu-517 contribute to the active site.

It belongs to the CTP synthase family. Homotetramer.

The catalysed reaction is UTP + L-glutamine + ATP + H2O = CTP + L-glutamate + ADP + phosphate + 2 H(+). It catalyses the reaction L-glutamine + H2O = L-glutamate + NH4(+). The enzyme catalyses UTP + NH4(+) + ATP = CTP + ADP + phosphate + 2 H(+). It functions in the pathway pyrimidine metabolism; CTP biosynthesis via de novo pathway; CTP from UDP: step 2/2. Allosterically activated by GTP, when glutamine is the substrate; GTP has no effect on the reaction when ammonia is the substrate. The allosteric effector GTP functions by stabilizing the protein conformation that binds the tetrahedral intermediate(s) formed during glutamine hydrolysis. Inhibited by the product CTP, via allosteric rather than competitive inhibition. Functionally, catalyzes the ATP-dependent amination of UTP to CTP with either L-glutamine or ammonia as the source of nitrogen. Regulates intracellular CTP levels through interactions with the four ribonucleotide triphosphates. The sequence is that of CTP synthase from Shewanella frigidimarina (strain NCIMB 400).